The primary structure comprises 380 residues: Protein Wnt-5a (380 aa).

A signal peptide spans 1-37 (MKKPIGILSPGVALGTAGGAMSSKFFLMALATFFSFA). Positions 38-61 (QVVIEANSWWSLGMNNPVQMSEVY) are excised as a propeptide. Cysteines 104 and 115 form a disulfide. 2 N-linked (GlcNAc...) asparagine glycosylation sites follow: Asn114 and Asn120. Cystine bridges form between Cys154/Cys162, Cys164/Cys182, Cys238/Cys252, Cys240/Cys247, Cys309/Cys340, Cys325/Cys335, Cys339/Cys379, Cys355/Cys370, Cys357/Cys367, and Cys362/Cys363. The O-palmitoleoyl serine; by PORCN moiety is linked to residue Ser244. Residues Asn312 and Asn326 are each glycosylated (N-linked (GlcNAc...) asparagine).

This sequence belongs to the Wnt family. In terms of assembly, forms a soluble 1:1 complex with AFM; this prevents oligomerization and is required for prolonged biological activity. The complex with AFM may represent the physiological form in body fluids. Homooligomer; disulfide-linked, leading to inactivation. Interacts with PORCN. Interacts with WLS. Interacts with glypican GCP3. Interacts with PKD1 (via extracellular domain). Interacts with TMEM67. Post-translationally, glycosylation is necessary for secretion but not for activity. Palmitoleoylation is required for efficient binding to frizzled receptors. Depalmitoleoylation leads to Wnt signaling pathway inhibition. In terms of processing, proteolytic processing by TIKI1 and TIKI2 promotes oxidation and formation of large disulfide-bond oligomers, leading to inactivation of WNT5A. As to expression, expressed in a gradient at the caudal end of the embryo during gastrulation and later in the distal-most aspect of several structures that extend from the body such as the limbs and genital tubercle.

The protein localises to the secreted. Its subcellular location is the extracellular space. It is found in the extracellular matrix. In terms of biological role, ligand for members of the frizzled family of seven transmembrane receptors. Can activate or inhibit canonical Wnt signaling, depending on receptor context. In the presence of FZD4, activates beta-catenin signaling. In the presence of ROR2, inhibits the canonical Wnt pathway by promoting beta-catenin degradation through a GSK3-independent pathway which involves down-regulation of beta-catenin-induced reporter gene expression. Suppression of the canonical pathway allows chondrogenesis to occur and inhibits tumor formation. Stimulates cell migration. Decreases proliferation, migration, invasiveness and clonogenicity of carcinoma cells and may act as a tumor suppressor. Mediates motility of melanoma cells. Required during embryogenesis for extension of the primary anterior-posterior axis and for outgrowth of limbs and the genital tubercle. Inhibits type II collagen expression in chondrocytes. This Mus musculus (Mouse) protein is Protein Wnt-5a (Wnt5a).